Consider the following 809-residue polypeptide: MSSGQSFSHSLLKLPLSALVKGTAIPSNPIDDHHIDINKPIVYALPFRSAVDLLTLQKHALELGLPDPLSPLEIHGKSLKRYVFIASRPTLVQSDNDVPSDSIALFSDLLALHAEDSELDVQVIPATVLWGRKPGKEGNNKPYLQAMNGLQKAKAVITAGRDCLVRFSPVVSLRYMAQSHGTDSSIAHKLARVARIHFSRQKLAASGPDLPSRQVLFARLMKSPAIEQAIEEEAKSKNISMEKARKEAQDIMDEIAADFSYSLVKQGDRLLGWLWNKLYQGLNINNAATVRRLAQDGHEIVYVPCHRSHMDYLLLSYVLYHEGMVPPHIAAGINLNFFPAGPIFRRGGAFFIRRSFKGNRLYSTIFREYLAELFAKGYSVEYFSEGGRSRTGRLLPAKTGMLAMTIQAMLRGLNRPVTLVPVYIGYEHVMEVATYAKELRGKRKEKENAGLVLRTLRKLRNFGLGYVNFGEPIPLNQYLNEHAPEWTKDIDPMGASRPQWINPVVNQLANKMMTHINDAAAANALTLCATALLASRQRALSKDSLIHQIECYLQLLKNVPYSKTYTVPSESAEALVEHAISLDKFVIETDTMGDIISLDRNQSILMTYYRNNIIHLFALPSLIAQMIIRQENLTVSQIQQQVAEIYPFLKAELFLSHKEEELDELVVKVLNELVSQDLISLKADKVAKNQANTLTLVLLGRTISETLQRYSIAFNLLVSNPELAKADLEQKSQDIAQRLTRLHGINAPEYFDKGVFASLFSTLKQQGYLDSDGNCDSEKTAQFATLLYALLYPEVKLTIEESVFQLKSA.

An HXXXXD motif motif is present at residues 306–311 (HRSHMD).

Belongs to the GPAT/DAPAT family.

It is found in the cell inner membrane. The catalysed reaction is sn-glycerol 3-phosphate + an acyl-CoA = a 1-acyl-sn-glycero-3-phosphate + CoA. The protein operates within phospholipid metabolism; CDP-diacylglycerol biosynthesis; CDP-diacylglycerol from sn-glycerol 3-phosphate: step 1/3. This is Glycerol-3-phosphate acyltransferase from Vibrio vulnificus (strain YJ016).